Reading from the N-terminus, the 185-residue chain is Ribosome-recycling factor (185 aa).

This sequence belongs to the RRF family.

It is found in the cytoplasm. In terms of biological role, responsible for the release of ribosomes from messenger RNA at the termination of protein biosynthesis. May increase the efficiency of translation by recycling ribosomes from one round of translation to another. This Wolbachia sp. subsp. Drosophila simulans (strain wRi) protein is Ribosome-recycling factor.